A 244-amino-acid chain; its full sequence is Probable transcriptional regulatory protein MMOB1910 (244 aa).

Belongs to the TACO1 family.

It is found in the cytoplasm. The chain is Probable transcriptional regulatory protein MMOB1910 from Mycoplasma mobile (strain ATCC 43663 / 163K / NCTC 11711) (Mesomycoplasma mobile).